The primary structure comprises 65 residues: Small ribosomal subunit protein bS21 (65 aa).

The protein belongs to the bacterial ribosomal protein bS21 family.

The sequence is that of Small ribosomal subunit protein bS21 from Geobacter sp. (strain M21).